A 433-amino-acid polypeptide reads, in one-letter code: Oxaloacetate decarboxylase beta chain 2 (433 aa).

The next 9 helical transmembrane spans lie at 13–35, 42–64, 125–147, 160–182, 214–236, 266–288, 308–327, 339–361, and 413–432; these read LMHLGAGQAIMLLVSLLLLWLAI, LLLLPIGFGGLLSNIPEAGLALT, LFYKVAIGSGVAPLVIFMGVGAM, LLLGAAAQFGIFATVLGALTLNY, LAPELLGAIAVAAYSYMALVPLI, ILFPVVLLMLVALLLPDAAPLLG, TVQNGLINIVTIFLGLSVGA, TLGILLLGVIAFGIGTAAGVLMA, and VAGVIGSAIAAGVMLKYVLA.

Belongs to the GcdB/MmdB/OadB family. As to quaternary structure, heterotrimer of an alpha, a beta and a gamma subunit. The cofactor is Na(+).

The protein resides in the cell membrane. The enzyme catalyses oxaloacetate + 2 Na(+)(in) + H(+) = pyruvate + 2 Na(+)(out) + CO2. Functionally, catalyzes the decarboxylation of oxaloacetate coupled to Na(+) translocation. This is Oxaloacetate decarboxylase beta chain 2 (oadB2) from Salmonella typhimurium (strain LT2 / SGSC1412 / ATCC 700720).